The following is a 1165-amino-acid chain: Symplekin (1165 aa).

HEAT repeat units follow at residues 23–58 (TATARAKVVDWCNELVIASPSTKCELLAKVQETVLG), 61–95 (AELAEEFLESVLSLAHDSNMEVRKQVVAFVEQVCK), 98–140 (VELL…YLCS), 147–186 (SAEQAWNILSLIKAQILDMIDNENDGIRTNAIKFLEGVVV), and 218–257 (KLQEEGNNILDILLQFHGTTHISSVNLIACTSSLCTIAKM). The tract at residues 365–384 (DQQQREMELDTEELERQKQK) is disordered. Over residues 367–384 (QQREMELDTEELERQKQK) the composition is skewed to basic and acidic residues.

The protein belongs to the Symplekin family. As to quaternary structure, interacts with Cpsf73 and Cpsf100 forming a core cleavage factor required for both polyadenylated and histone mRNA processing. Interacts with Slbp and Lsm11.

It is found in the nucleus. In terms of biological role, component of a protein complex required for cotranscriptional processing of 3'-ends of polyadenylated and histone pre-mRNA. Involved in germline stem cell transit amplification, differentiation and mitosis-to-meiosis transition. This chain is Symplekin, found in Drosophila melanogaster (Fruit fly).